A 279-amino-acid chain; its full sequence is Pantothenate synthetase (279 aa).

Methionine 26–histidine 33 serves as a coordination point for ATP. Histidine 33 (proton donor) is an active-site residue. Glutamine 57 is a (R)-pantoate binding site. Glutamine 57 contributes to the beta-alanine binding site. Glycine 144 to aspartate 147 provides a ligand contact to ATP. Residue glutamine 150 participates in (R)-pantoate binding. ATP-binding positions include valine 173 and leucine 181–arginine 184.

Belongs to the pantothenate synthetase family. As to quaternary structure, homodimer.

It localises to the cytoplasm. The catalysed reaction is (R)-pantoate + beta-alanine + ATP = (R)-pantothenate + AMP + diphosphate + H(+). It functions in the pathway cofactor biosynthesis; (R)-pantothenate biosynthesis; (R)-pantothenate from (R)-pantoate and beta-alanine: step 1/1. Functionally, catalyzes the condensation of pantoate with beta-alanine in an ATP-dependent reaction via a pantoyl-adenylate intermediate. This is Pantothenate synthetase from Burkholderia vietnamiensis (strain G4 / LMG 22486) (Burkholderia cepacia (strain R1808)).